The sequence spans 347 residues: UDP-3-O-acylglucosamine N-acyltransferase (347 aa).

Residue His-241 is the Proton acceptor of the active site.

This sequence belongs to the transferase hexapeptide repeat family. LpxD subfamily. In terms of assembly, homotrimer.

The enzyme catalyses a UDP-3-O-[(3R)-3-hydroxyacyl]-alpha-D-glucosamine + a (3R)-hydroxyacyl-[ACP] = a UDP-2-N,3-O-bis[(3R)-3-hydroxyacyl]-alpha-D-glucosamine + holo-[ACP] + H(+). Its pathway is bacterial outer membrane biogenesis; LPS lipid A biosynthesis. In terms of biological role, catalyzes the N-acylation of UDP-3-O-acylglucosamine using 3-hydroxyacyl-ACP as the acyl donor. Is involved in the biosynthesis of lipid A, a phosphorylated glycolipid that anchors the lipopolysaccharide to the outer membrane of the cell. The protein is UDP-3-O-acylglucosamine N-acyltransferase of Neisseria gonorrhoeae (strain ATCC 700825 / FA 1090).